Reading from the N-terminus, the 590-residue chain is Beta-glucosidase 29 (590 aa).

An N-terminal signal peptide occupies residues 1–21; sequence MNVQIFILLLIISWLTPKITS. Residues Gln48, His151, and 196 to 197 each bind a beta-D-glucoside; that span reads NE. Catalysis depends on Glu197, which acts as the Proton donor. The cysteines at positions 216 and 224 are disulfide-linked. 2 N-linked (GlcNAc...) asparagine glycosylation sites follow: Asn255 and Asn331. Tyr341 is a binding site for a beta-D-glucoside. Asn371 carries an N-linked (GlcNAc...) asparagine glycan. Residues Glu413, Trp463, 470 to 471, and Phe479 contribute to the a beta-D-glucoside site; that span reads EW. The Nucleophile role is filled by Glu413. N-linked (GlcNAc...) asparagine glycans are attached at residues Asn522 and Asn553.

This sequence belongs to the glycosyl hydrolase 1 family.

It catalyses the reaction Hydrolysis of terminal, non-reducing beta-D-glucosyl residues with release of beta-D-glucose.. In Arabidopsis thaliana (Mouse-ear cress), this protein is Beta-glucosidase 29.